A 185-amino-acid polypeptide reads, in one-letter code: Ribose 1,5-bisphosphate phosphokinase PhnN (185 aa).

10–17 (GPSGSGKD) contacts ATP.

This sequence belongs to the ribose 1,5-bisphosphokinase family.

The enzyme catalyses alpha-D-ribose 1,5-bisphosphate + ATP = 5-phospho-alpha-D-ribose 1-diphosphate + ADP. It participates in metabolic intermediate biosynthesis; 5-phospho-alpha-D-ribose 1-diphosphate biosynthesis; 5-phospho-alpha-D-ribose 1-diphosphate from D-ribose 5-phosphate (route II): step 3/3. Functionally, catalyzes the phosphorylation of ribose 1,5-bisphosphate to 5-phospho-D-ribosyl alpha-1-diphosphate (PRPP). This Shigella dysenteriae serotype 1 (strain Sd197) protein is Ribose 1,5-bisphosphate phosphokinase PhnN.